The chain runs to 384 residues: Spermidine/putrescine import ATP-binding protein PotA (384 aa).

The region spanning 6-238 is the ABC transporter domain; it reads ITFNNVSKTF…PINHFVANFI (233 aa). 40–47 is a binding site for ATP; that stretch reads GASGSGKS.

The protein belongs to the ABC transporter superfamily. Spermidine/putrescine importer (TC 3.A.1.11.1) family. In terms of assembly, the complex is composed of two ATP-binding proteins (PotA), two transmembrane proteins (PotB and PotC) and a solute-binding protein (PotD).

The protein localises to the cell membrane. It catalyses the reaction ATP + H2O + polyamine-[polyamine-binding protein]Side 1 = ADP + phosphate + polyamineSide 2 + [polyamine-binding protein]Side 1.. Functionally, part of the ABC transporter complex PotABCD involved in spermidine/putrescine import. Responsible for energy coupling to the transport system. The polypeptide is Spermidine/putrescine import ATP-binding protein PotA (Streptococcus pyogenes serotype M6 (strain ATCC BAA-946 / MGAS10394)).